Here is a 480-residue protein sequence, read N- to C-terminus: 2-phosphoxylose phosphatase 1 (480 aa).

At 1–6 the chain is on the cytoplasmic side; sequence MLYRNR. The helical; Signal-anchor for type II membrane protein transmembrane segment at 7 to 27 threads the bilayer; sequence FLVLLALAGLLAFLSLSLQFF. Residues 28-480 lie on the Lumenal side of the membrane; the sequence is HLIPVSTTKN…YYDACHGEGA (453 aa). Catalysis depends on H97, which acts as the Nucleophile. 3 N-linked (GlcNAc...) asparagine glycosylation sites follow: N194, N305, and N354. Residue D379 is the Proton donor of the active site.

The protein belongs to the histidine acid phosphatase family. In terms of assembly, interacts with B3GAT3; the interaction increases the 2-phosphoxylose phosphatase activity of PXYLP1 during completion of linkage region formation in a B3GAT3-mediated manner.

It localises to the golgi apparatus membrane. It carries out the reaction 3-O-[beta-D-GlcA-(1-&gt;3)-beta-D-Gal-(1-&gt;3)-beta-D-Gal-(1-&gt;4)-beta-D-2-O-P-Xyl]-L-seryl-[protein] + H2O = 3-O-(beta-D-GlcA-(1-&gt;3)-beta-D-Gal-(1-&gt;3)-beta-D-Gal-(1-&gt;4)-beta-D-Xyl)-L-seryl-[protein] + phosphate. Its function is as follows. Responsible for the 2-O-dephosphorylation of xylose in the glycosaminoglycan-protein linkage region of proteoglycans thereby regulating the amount of mature glycosaminoglycan (GAG) chains. Sulfated glycosaminoglycans (GAGs), including heparan sulfate and chondroitin sulfate, are synthesized on the so-called common GAG-protein linkage region (GlcUAbeta1-3Galbeta1-3Galbeta1-4Xylbeta1-O-Ser) of core proteins, which is formed by the stepwise addition of monosaccharide residues by the respective specific glycosyltransferases. Xylose 2-O-dephosphorylation during completion of linkage region formation is a prerequisite for the initiation and efficient elongation of the repeating disaccharide region of GAG chains. The sequence is that of 2-phosphoxylose phosphatase 1 from Rattus norvegicus (Rat).